A 352-amino-acid polypeptide reads, in one-letter code: PDZ and LIM domain protein 2 (352 aa).

Positions Met-1 to Gln-84 constitute a PDZ domain. Disordered stretches follow at residues Ser-67–Leu-97 and Tyr-111–Ala-149. The segment covering Asp-81–Ser-95 has biased composition (polar residues). The span at Tyr-111–Pro-135 shows a compositional bias: low complexity. Ser-124 bears the Phosphoserine mark. Thr-126 is subject to Phosphothreonine. Residues Ser-127, Ser-129, Ser-134, Ser-137, Ser-143, Ser-161, Ser-197, Ser-203, Ser-213, and Ser-266 each carry the phosphoserine modification. The tract at residues Leu-170–Ser-213 is disordered. One can recognise an LIM zinc-binding domain in the interval His-284–Ala-344.

As to quaternary structure, interacts with alpha-actinins ACTN1 and ACTN4, FLNA and MYH9. Interacts (via LIM zinc-binding domain) with MKRN2.

Its subcellular location is the cytoplasm. It localises to the nucleus. The protein resides in the cytoskeleton. Its function is as follows. Probable adapter protein located at the actin cytoskeleton that promotes cell attachment. Necessary for the migratory capacity of epithelial cells. Overexpression enhances cell adhesion to collagen and fibronectin and suppresses anchorage independent growth. May contribute to tumor cell migratory capacity. This Homo sapiens (Human) protein is PDZ and LIM domain protein 2 (PDLIM2).